A 308-amino-acid polypeptide reads, in one-letter code: Ribosomal protein L11 methyltransferase (308 aa).

S-adenosyl-L-methionine-binding residues include Thr-160, Gly-181, Asp-203, and Asn-245.

This sequence belongs to the methyltransferase superfamily. PrmA family.

The protein resides in the cytoplasm. It catalyses the reaction L-lysyl-[protein] + 3 S-adenosyl-L-methionine = N(6),N(6),N(6)-trimethyl-L-lysyl-[protein] + 3 S-adenosyl-L-homocysteine + 3 H(+). Methylates ribosomal protein L11. This Thermoanaerobacter pseudethanolicus (strain ATCC 33223 / 39E) (Clostridium thermohydrosulfuricum) protein is Ribosomal protein L11 methyltransferase.